The sequence spans 477 residues: Bifunctional protein HldE (477 aa).

A ribokinase region spans residues 1-318; sequence MKVTLSEFER…ENAVRGRADT (318 aa). Residue Lys-179 is modified to N6-acetyllysine. Residue 195-198 participates in ATP binding; it reads NLSE. The active site involves Asp-264. A cytidylyltransferase region spans residues 344 to 477; the sequence is MTNGVFDILH…IKKIQQDKKG (134 aa).

In the N-terminal section; belongs to the carbohydrate kinase PfkB family. This sequence in the C-terminal section; belongs to the cytidylyltransferase family. Homodimer.

The catalysed reaction is D-glycero-beta-D-manno-heptose 7-phosphate + ATP = D-glycero-beta-D-manno-heptose 1,7-bisphosphate + ADP + H(+). The enzyme catalyses D-glycero-beta-D-manno-heptose 1-phosphate + ATP + H(+) = ADP-D-glycero-beta-D-manno-heptose + diphosphate. It participates in nucleotide-sugar biosynthesis; ADP-L-glycero-beta-D-manno-heptose biosynthesis; ADP-L-glycero-beta-D-manno-heptose from D-glycero-beta-D-manno-heptose 7-phosphate: step 1/4. Its pathway is nucleotide-sugar biosynthesis; ADP-L-glycero-beta-D-manno-heptose biosynthesis; ADP-L-glycero-beta-D-manno-heptose from D-glycero-beta-D-manno-heptose 7-phosphate: step 3/4. Functionally, catalyzes the phosphorylation of D-glycero-D-manno-heptose 7-phosphate at the C-1 position to selectively form D-glycero-beta-D-manno-heptose-1,7-bisphosphate. Its function is as follows. Catalyzes the ADP transfer from ATP to D-glycero-beta-D-manno-heptose 1-phosphate, yielding ADP-D-glycero-beta-D-manno-heptose. The polypeptide is Bifunctional protein HldE (Shigella boydii serotype 18 (strain CDC 3083-94 / BS512)).